Consider the following 1734-residue polypeptide: Complement C4-A (1734 aa).

An N-terminal signal peptide occupies residues 1–19; the sequence is MRLLWGLAWVFSFCASSLQ. A disulfide bridge connects residues C66 and C95. N224 carries an N-linked (GlcNAc...) asparagine glycan. A disulfide bridge links C633 with C667. Positions 674–677 are excised as a propeptide; that stretch reads RQKR. Disulfide bonds link C700–C726, C701–C733, and C714–C734. Residues 700–734 enclose the Anaphylatoxin-like domain; it reads CCQDGMTKLPMKRTCEQRAARVPQQACREPFLSCC. Residues N743 and N859 are each glycosylated (N-linked (GlcNAc...) asparagine). Positions 1002-1005 form a cross-link, isoglutamyl cysteine thioester (Cys-Gln); sequence CAEQ. 2 N-linked (GlcNAc...) asparagine glycosylation sites follow: N1128 and N1383. Y1409 is subject to Sulfotyrosine. Positions 1437 to 1443 are excised as a propeptide; the sequence is RRSRRRR. 5 disulfides stabilise this stretch: C1461–C1525, C1573–C1578, C1585–C1663, C1608–C1732, and C1708–C1717. One can recognise an NTR domain in the interval 1585–1732; sequence CPRLLRSLER…FLMEFSSRGC (148 aa).

As to quaternary structure, in absence of complement activation, circulates in blood as a disulfide-linked trimer of an alpha, beta and gamma chain. In terms of assembly, complement C4b is composed of Complement C4b-A, Complement C4 beta and Complement C4 gamma chains that are associated via disulfide bonds. Non-enzymatic component of the C3 convertase, also named C4bC2b, composed of the serine protease complement C2b (C2), as well as complement C4b. Non-enzymatic component of the C5 convertase, also named C4bC2bC3b, composed of the serine protease complement C2b (C2), complement C3b, as well as complement C4b. Post-translationally, prior to secretion, the single-chain precursor is enzymatically cleaved by plasminogen (PLG) to yield non-identical chains alpha, beta and gamma. During activation of the complement systems, the alpha chain is cleaved into C4a and C4b by different proteases depending on the complement pathway: C4b stays linked to the beta and gamma chains, while C4a is released in the plasma. The alpha chain is cleaved by C1S to generate C4a and C4b following activation by the classical complement system. The alpha chain is cleaved to generate C4a and C4b by MASP2 following activation by the lectin complement system. The alpha chain is cleaved by GZMK to generate C4a and C4b following activation by the GZMK complement system. Further degradation of C4b by C1 into the inactive fragments C4c and C4d blocks the generation of C3 convertase. The proteolytic cleavages often are incomplete so that many structural forms can be found in plasma. Upon activation, the internal thioester bond reacts with carbohydrate antigens on the target surface to form amide or ester bonds, leading to covalent association with the surface of pathogens. In terms of processing, complement C4b interacts with complement C3b via a thioester linkage. Post-translationally, N- and O-glycosylated. O-glycosylated with a core 1 or possibly core 8 glycan.

The protein resides in the secreted. Its subcellular location is the synapse. It is found in the cell projection. It localises to the axon. The protein localises to the dendrite. The protein resides in the cell surface. Its activity is regulated as follows. Specifically inhibited by nanobody hC4Nb8, inhibiting the classical complement pathway. In terms of biological role, precursor of non-enzymatic components of the classical, lectin and GZMK complement pathways, which consist in a cascade of proteins that leads to phagocytosis and breakdown of pathogens and signaling that strengthens the adaptive immune system. Non-enzymatic component of C3 and C5 convertases. Generated following cleavage by complement proteases (C1S, MASP2 or GZMK, depending on the complement pathway), it covalently attaches to the surface of pathogens, where it acts as an opsonin that marks the surface of antigens for removal. It then recruits the serine protease complement C2b to form the C3 and C5 convertases, which cleave and activate C3 and C5, respectively, the next components of the complement pathways. Complement C4b-A isotype is responsible for effective binding to form amide bonds with immune aggregates or protein antigens, while complement C4b-B isotype catalyzes the transacylation of the thioester carbonyl group to form ester bonds with carbohydrate antigens. Functionally, putative humoral mediator released following cleavage by complement proteases (C1S, MASP2 or GZMK, depending on the complement pathway). While it is strongly similar to anaphylatoxins, its role is unclear. Was reported to act as a mediator of local inflammatory process; however these effects were probably due to contamination with C3a and/C5a anaphylatoxins in biological assays. The chain is Complement C4-A from Mus musculus (Mouse).